Consider the following 150-residue polypeptide: Transcription antitermination protein NusB (150 aa).

This sequence belongs to the NusB family.

In terms of biological role, involved in transcription antitermination. Required for transcription of ribosomal RNA (rRNA) genes. Binds specifically to the boxA antiterminator sequence of the ribosomal RNA (rrn) operons. The chain is Transcription antitermination protein NusB from Streptococcus pyogenes serotype M1.